Here is a 125-residue protein sequence, read N- to C-terminus: Probable growth factor FPV211 (125 aa).

Positions M1–L48 are cleaved as a signal peptide. Residues L80 to D120 form the EGF-like domain. 3 disulfides stabilise this stretch: C84/C97, C92/C108, and C110/C119.

The protein resides in the secreted. This chain is Probable growth factor FPV211, found in Vertebrata (FPV).